The sequence spans 240 residues: uncharacterized protein (240 aa).

Residues 1–27 form a disordered region; it reads MKDLQKKSSVRRQITNEDDERYGEDSI. Phosphoserine is present on residues Ser-59 and Ser-95. The interval 189–227 is disordered; that stretch reads RTPSPTGKSVGDEATSNNMHSSSAIRNPNGPTVDPEEGK. A compositionally biased stretch (polar residues) spans 202 to 218; that stretch reads ATSNNMHSSSAIRNPNG.

This is an uncharacterized protein from Saccharomyces cerevisiae (strain ATCC 204508 / S288c) (Baker's yeast).